The sequence spans 261 residues: Ribosomal RNA small subunit methyltransferase J (261 aa).

S-adenosyl-L-methionine-binding positions include 109 to 110 (RD), 125 to 126 (ER), and D179.

This sequence belongs to the methyltransferase superfamily. RsmJ family.

The protein localises to the cytoplasm. It carries out the reaction guanosine(1516) in 16S rRNA + S-adenosyl-L-methionine = N(2)-methylguanosine(1516) in 16S rRNA + S-adenosyl-L-homocysteine + H(+). Specifically methylates the guanosine in position 1516 of 16S rRNA. This Pseudomonas aeruginosa (strain ATCC 15692 / DSM 22644 / CIP 104116 / JCM 14847 / LMG 12228 / 1C / PRS 101 / PAO1) protein is Ribosomal RNA small subunit methyltransferase J.